Consider the following 555-residue polypeptide: Carboxylic ester hydrolase (555 aa).

The signal sequence occupies residues 1 to 19; it reads MELSVIALLLLGFVNFSWQ. C86 and C107 are disulfide-bonded. Residues N120 and N144 are each glycosylated (N-linked (GlcNAc...) asparagine). S211 serves as the catalytic Acyl-ester intermediate. The cysteines at positions 263 and 274 are disulfide-linked. E336 serves as the catalytic Charge relay system. N369 and N397 each carry an N-linked (GlcNAc...) asparagine glycan. H459 acts as the Charge relay system in catalysis. N-linked (GlcNAc...) asparagine glycans are attached at residues N473 and N533.

Belongs to the type-B carboxylesterase/lipase family. In terms of processing, N-glycosylated. Expressed in several tissues, including epidermis (at protein level), fat body (at protein level), gut (at protein level), muscle (at protein level), and venom gland (at protein level).

The protein resides in the secreted. The enzyme catalyses a carboxylic ester + H2O = an alcohol + a carboxylate + H(+). In terms of biological role, lipolytic agent that may be involved in distributing the venom via degradation of blood triglycerides. The recombinant protein degrades triglycerides and exhibits high lipolytic activity toward long-chain triglycerides (tested on tributyrin, trioctanoin and triolein). Does not affect mammalian cells. The sequence is that of Carboxylic ester hydrolase (vCaE) from Bombus ignitus (Bumblebee).